Reading from the N-terminus, the 205-residue chain is MCKGLAGLPASCLRSAKDMKHRLGFLLQKSDSCEHNSSHNKKDKVVICQRVSQEEVKKWAESLENLISHECGLAAFKAFLKSEYSEENIDFWISCEEYKKIKSPSKLSPKAKKIYNEFISVQATKEVNLDSCTREETSRNMLEPTITCFDEAQKKIFNLMEKDSYRRFLKSRFYLDLVNPSSCGAEKQKGAKSSADCASLVPQCA.

S-palmitoyl cysteine attachment occurs at residues Cys2, Cys12, and Cys95. An RGS domain is found at 62–178 (SLENLISHEC…LKSRFYLDLV (117 aa)).

In terms of processing, palmitoylated on Cys-2 and/or Cys-12. Phosphorylated by cyclic GMP-dependent protein kinase. In terms of tissue distribution, expressed in brain and heart. Expressed in brain at protein level. Expressed in prefontal and visual cortex. Isoform 4 and isoform 5 are expressed ubiquitously. Isoform 1, isoform 2 and isoform 3 are not expressed in the cerebellum.

Inhibits signal transduction by increasing the GTPase activity of G protein alpha subunits thereby driving them into their inactive GDP-bound form. Activity on G(z)-alpha is inhibited by phosphorylation of the G-protein. Activity on G(z)-alpha and G(i)-alpha-1 is inhibited by palmitoylation of the G-protein. The polypeptide is Regulator of G-protein signaling 4 (RGS4) (Homo sapiens (Human)).